A 169-amino-acid chain; its full sequence is Required for excision 1-B domain-containing protein (169 aa).

The sequence is that of Required for excision 1-B domain-containing protein from Mus musculus (Mouse).